The following is a 346-amino-acid chain: Methylthioribose-1-phosphate isomerase (346 aa).

Residues 48 to 50 (RGA), arginine 91, and glutamine 196 contribute to the substrate site. Catalysis depends on aspartate 237, which acts as the Proton donor. Substrate is bound at residue 247 to 248 (NK).

It belongs to the eIF-2B alpha/beta/delta subunits family. MtnA subfamily.

It catalyses the reaction 5-(methylsulfanyl)-alpha-D-ribose 1-phosphate = 5-(methylsulfanyl)-D-ribulose 1-phosphate. It functions in the pathway amino-acid biosynthesis; L-methionine biosynthesis via salvage pathway; L-methionine from S-methyl-5-thio-alpha-D-ribose 1-phosphate: step 1/6. Catalyzes the interconversion of methylthioribose-1-phosphate (MTR-1-P) into methylthioribulose-1-phosphate (MTRu-1-P). The protein is Methylthioribose-1-phosphate isomerase of Thermosipho melanesiensis (strain DSM 12029 / CIP 104789 / BI429).